We begin with the raw amino-acid sequence, 859 residues long: MARRWSTKESPRWRSALLLLFLAGVYGNGALAEHSENVHISGVSTACGETPEQIRAPSGIITSPGWPSEYPAKINCSWFIRANPGEIITISFQDFDIQGSRRCNLDWLTIETYKNIESYRACGSTIPPPYISSQDHIWIRFHSDDNISRKGFRLAYFSGKSEEPNCACDQFRCGNGKCIPEAWKCNNMDECGDSSDEEICAKEANPPTAAAFQPCAYNQFQCLSRFTKVYTCLPESLKCDGNIDCLDLGDEIDCDVPTCGQWLKYFYGTFNSPNYPDFYPPGSNCTWLIDTGDHRKVILRFTDFKLDGTGYGDYVKIYDGLEENPHKLLRVLTAFDSHAPLTVVSSSGQIRVHFCADKVNAARGFNATYQVDGFCLPWEIPCGGNWGCYTEQQRCDGYWHCPNGRDEINCTMCQKEEFPCSRNGVCYPRSDRCNYQNHCPNGSDEKNCFFCQPGNFHCKNNRCVFESWVCDSQDDCGDGSDEENCPVIVPTRVITAAVIGSLICGLLLVIALGCTCKLYSLRMFERRSFETQLSRVEAELLRREAPPSYGQLIAQGLIPPVEDFPVCSPNQASVLENLRLAVRSQLGFTSVRLPMAGRSSNIWNRIFNFARSRHSGSLALVSADGDEVVPSQSTSREPERNHTHRSLFSVESDDTDTENERRDMAGASGGVAAPLPQKVPPTTAVEATVGACASSSTQSTRGGHADNGRDVTSVEPPSVSPARHQLTSALSRMTQGLRWVRFTLGRSSSVSQNQSPLRQLDNGVSGREDDDDVEMLIPISDGSSDFDVNDCSRPLLDLASDQGQGLRQPYNATNPGVRPSNRDGPCERCGIVHTAQIPDTCLEVTLKNETSDDEALLLC.

The signal sequence occupies residues 1–32 (MARRWSTKESPRWRSALLLLFLAGVYGNGALA). Residues 33–492 (EHSENVHISG…ENCPVIVPTR (460 aa)) are Extracellular-facing. 2 cysteine pairs are disulfide-bonded: C47/C76 and C103/C122. The region spanning 47-159 (CGETPEQIRA…KGFRLAYFSG (113 aa)) is the CUB 1 domain. N75 carries N-linked (GlcNAc...) asparagine glycosylation. Residue N146 is glycosylated (N-linked (GlcNAc...) asparagine). 2 LDL-receptor class A domains span residues 165-201 (NCAC…EICA) and 214-255 (PCAY…IDCD). Disulfide bonds link C166–C178, C173–C191, C185–C200, C215–C232, C222–C245, C239–C254, and C259–C285. One can recognise a CUB 2 domain in the interval 259-372 (CGQWLKYFYG…RGFNATYQVD (114 aa)). N284 and N366 each carry an N-linked (GlcNAc...) asparagine glycan. LDL-receptor class A domains lie at 374–411 (FCLP…INCT), 412–449 (MCQK…KNCF), and 450–486 (FCQP…ENCP). 9 cysteine pairs are disulfide-bonded: C375–C388, C382–C401, C395–C410, C413–C426, C420–C439, C433–C448, C451–C463, C458–C476, and C470–C485. N-linked (GlcNAc...) asparagine glycosylation occurs at N409. An N-linked (GlcNAc...) asparagine glycan is attached at N441. The helical transmembrane segment at 493–513 (VITAAVIGSLICGLLLVIALG) threads the bilayer. Over 514 to 859 (CTCKLYSLRM…TSDDEALLLC (346 aa)) the chain is Cytoplasmic. Disordered regions lie at residues 623–678 (ADGD…LPQK), 693–723 (ASSS…SPAR), 748–770 (SSVS…REDD), and 802–823 (QGQG…SNRD). Composition is skewed to polar residues over residues 748-757 (SSVSQNQSPL) and 802-814 (QGQG…NATN).

This sequence belongs to the LDLR family. May interact with RACK1, ZFYVE9 and NMRK2.

The protein localises to the membrane. The protein resides in the coated pit. Functionally, probable receptor, which may be involved in the internalization of lipophilic molecules and/or signal transduction. May act as a tumor suppressor. The protein is Low-density lipoprotein receptor-related protein 12 (LRP12) of Pongo abelii (Sumatran orangutan).